Here is a 189-residue protein sequence, read N- to C-terminus: GTP cyclohydrolase 1 (189 aa).

Zn(2+) is bound by residues cysteine 78, histidine 81, and cysteine 150.

The protein belongs to the GTP cyclohydrolase I family. Homomer.

The enzyme catalyses GTP + H2O = 7,8-dihydroneopterin 3'-triphosphate + formate + H(+). It participates in cofactor biosynthesis; 7,8-dihydroneopterin triphosphate biosynthesis; 7,8-dihydroneopterin triphosphate from GTP: step 1/1. This chain is GTP cyclohydrolase 1, found in Bacillus mycoides (strain KBAB4) (Bacillus weihenstephanensis).